We begin with the raw amino-acid sequence, 781 residues long: Catenin beta-1 (781 aa).

An N-acetylalanine modification is found at Ala-2. The interaction with VCL stretch occupies residues 2 to 23 (ATQADLMELDMAMEPDRKAAVS). The residue at position 23 (Ser-23) is a Phosphoserine; by GSK3-beta; alternate. O-linked (GlcNAc) serine; alternate glycosylation occurs at Ser-23. A Phosphoserine; by GSK3-beta modification is found at Ser-29. 2 positions are modified to phosphoserine; by GSK3-beta and HIPK2: Ser-33 and Ser-37. Residues 34–57 (GIHSGATTTAPSLSGKGNPEEEDV) are disordered. A Phosphothreonine; by GSK3-beta modification is found at Thr-41. The residue at position 45 (Ser-45) is a Phosphoserine. An N6-acetyllysine modification is found at Lys-49. Tyr-64 is modified (phosphotyrosine; by PTK6). The residue at position 142 (Tyr-142) is a Phosphotyrosine; by FYN and PTK6. ARM repeat units lie at residues 151 to 191 (RAIP…IMRS), 193 to 234 (QMVS…IFKS), 235 to 276 (GGIP…VRLA), 277 to 318 (GGLQ…ILAS), 319 to 360 (GGPQ…IVEA), 361 to 389 (GGMQ…RNLS), 400 to 441 (GLLG…VCQV), 442 to 484 (GGIE…AQNA), 489 to 530 (YGLP…LREQ), 531 to 571 (GAIP…EIVE), 594 to 636 (NTIP…AEGA), and 637 to 666 (TAPL…SEDK). Positions 156–178 (LTKLLNDEDQVVVNKAAVMVHQL) are interaction with BCL9. Ser-191 is subject to Phosphoserine; by CDK5. A Phosphoserine; by CDK5 modification is found at Ser-246. Position 331 is a phosphotyrosine; by PTK6 (Tyr-331). At Tyr-333 the chain carries Phosphotyrosine; by SRC and PTK6. Position 552 is a phosphoserine (Ser-552). At Thr-556 the chain carries (Microbial infection) Phosphothreonine. Thr-556 is modified (phosphothreonine). Position 619 is an S-nitrosocysteine (Cys-619). The residue at position 675 (Ser-675) is a Phosphoserine. The tract at residues 705 to 781 (EPLGYRQDDP…NQLAWFDTDL (77 aa)) is disordered. Residues 734 to 745 (MMEHEMGGHHPG) show a composition bias toward basic and acidic residues. The tract at residues 772–781 (NQLAWFDTDL) is interaction with SCRIB.

This sequence belongs to the beta-catenin family. Two separate complex-associated pools are found in the cytoplasm. The majority is present as component of an E-cadherin:catenin adhesion complex composed of at least E-cadherin/CDH1 and beta-catenin/CTNNB1, and possibly alpha-catenin/CTNNA1; the complex is located to adherens junctions. The stable association of CTNNA1 is controversial as CTNNA1 was shown not to bind to F-actin when assembled in the complex. Alternatively, the CTNNA1-containing complex may be linked to F-actin by other proteins such as LIMA1. Another cytoplasmic pool is part of a large complex containing AXIN1, AXIN2, APC, CSNK1A1 and GSK3B that promotes phosphorylation on N-terminal Ser and Thr residues and ubiquitination of CTNNB1 via BTRC and its subsequent degradation by the proteasome. Wnt-dependent activation of DVL antagonizes the action of GSK3B. When GSK3B activity is inhibited the complex dissociates, CTNNB1 is dephosphorylated and is no longer targeted for destruction. The stabilized protein translocates to the nucleus, where it binds TCF/LEF-1 family members, BCL9, BCL9L and possibly also RUVBL1 and CHD8. Binds CTNNBIP and EP300. CTNNB1 forms a ternary complex with LEF1 and EP300 that is disrupted by CTNNBIP1 binding. Interacts with TAX1BP3 (via the PDZ domain); this interaction inhibits the transcriptional activity of CTNNB1. Interacts with AJAP1, BAIAP1, CARM1, CTNNA3, CXADR and PCDH11Y. Binds NHERF1. Interacts with GLIS2 and MUC1. Interacts with SLC30A9. Interacts with XIRP1. Interacts directly with AXIN1; the interaction is regulated by CDK2 phosphorylation of AXIN1. Interacts with SCRIB. Interacts with RAPGEF2. Interacts with PTPRU (via the cytoplasmic juxtamembrane domain). Interacts with EMD. Interacts with TNIK and TCF7L2. Interacts with SESTD1 and TRPC4. Interacts with CAV1. Interacts with TRPV4. The TRPV4 and CTNNB1 complex can interact with CDH1. Interacts with VCL. Interacts with PTPRJ. Interacts with PKT7 and CDK2. Interacts with FAT1 (via the cytoplasmic domain). Interacts with NANOS1 and NDRG2. Interacts with isoform 1 of NEK2. Interacts with both isoform 1 and isoform 2 of CDK5. Interacts with PTK6. Interacts with SOX7; this interaction may lead to proteasomal degradation of active CTNNB1 and thus inhibition of Wnt/beta-catenin-stimulated transcription. Identified in a complex with HINT1 and MITF. Interacts with FHIT. The CTNNB1 and TCF7L2/TCF4 complex interacts with PML (isoform PML-4). Interacts with FERMT2. Identified in a complex with TCF7L2/TCF4 and FERMT2. Interacts with RORA. May interact with P-cadherin/CDH3. Interacts with RNF220. Interacts with CTNND2. Interacts (via the C-terminal region) with CBY1. The complex composed, at least, of APC, CTNNB1 and GSK3B interacts with JPT1; the interaction requires the inactive form of GSK3B (phosphorylated at 'Ser-9'). Interacts with DLG5. Interacts with FAM53B; promoting translocation to the nucleus. Interacts with TMEM170B. Interacts with AHI1. Interacts with GID8. Component of an cadherin:catenin adhesion complex composed of at least of CDH26, beta-catenin/CTNNB1, alpha-catenin/CTNNA1 and p120 catenin/CTNND1. Forms a complex comprising APPL1, RUVBL2, APPL2, HDAC1 and HDAC2. Interacts with IRF2BPL; mediates the ubiquitination and degradation of CTNNB1. Interacts with AMFR. Interacts with LMBR1L. Interacts with SOX30; prevents interaction of CTNNB1 with TCF7L2/TCF4 and leads to inhibition of Wnt signaling. Interacts with SOX9; inhibiting CTNNB1 activity by competing with the binding sites of TCF/LEF within CTNNB1, thereby inhibiting the Wnt signaling. Interacts with SPN/CD43 cytoplasmic tail. Interacts (when phosphorylated at Tyr-333) with isoform M2 of PKM (PKM2); promoting transcription activation. Interacts with PKP2 (via HEAD domain). Interacts with CDH1. Interacts (when unphosphorylated) with FLYWCH1, perhaps preventing interaction of CTNNB1 with TCF4, and thereby regulating transcription activation; phosphorylation of CTNNB1 may inhibit the interaction. Interacts (via the central armadillo domains) with probable transcriptional regulator ADNP (via N-terminal region); interaction is direct and stabilizes CTNNB1 by modulating its phosphorylation by glycogen synthase kinase-3 beta GSK3B. Interacts with NR5A2. Interacts with DSG2; the interaction promotes localization of CTNNB1 at cell junctions thus reducing its nuclear localization and subsequent transcription of CTNNB1/TCF-target genes. As to quaternary structure, (Microbial infection) Interacts with herpes virus 8 protein vPK; this interaction inhibits the Wnt signaling pathway. In terms of processing, phosphorylation at Ser-552 by AMPK promotes stabilization of the protein, enhancing TCF/LEF-mediated transcription. Phosphorylation by GSK3B requires prior phosphorylation of Ser-45 by another kinase. Phosphorylation proceeds then from Thr-41 to Ser-37 and Ser-33. Phosphorylated by NEK2. EGF stimulates tyrosine phosphorylation. Phosphorylated on Ser-33 and Ser-37 by HIPK2 and GSK3B, this phosphorylation triggers proteasomal degradation. Phosphorylation on Ser-191 and Ser-246 by CDK5. Phosphorylation by CDK2 regulates insulin internalization. Phosphorylation by PTK6 at Tyr-64, Tyr-142, Tyr-331 and/or Tyr-333 with the predominant site at Tyr-64 is not essential for inhibition of transcriptional activity. Phosphorylation by SRC at Tyr-333 promotes interaction with isoform M2 of PKM (PKM2); promoting transcription activation. Post-translationally, ubiquitinated by the SCF(BTRC) E3 ligase complex when phosphorylated by GSK3B, leading to its degradation. Ubiquitinated by a E3 ubiquitin ligase complex containing UBE2D1, SIAH1, CACYBP/SIP, SKP1, APC and TBL1X, leading to its subsequent proteasomal degradation. Ubiquitinated and degraded following interaction with SOX9. Ubiquitinated via 'Lys-11'- and 'Lys-29'-linked ubiquitin chains by UBR5, leading to its stabilization. S-nitrosylation at Cys-619 within adherens junctions promotes VEGF-induced, NO-dependent endothelial cell permeability by disrupting interaction with E-cadherin, thus mediating disassembly adherens junctions. In terms of processing, O-glycosylation at Ser-23 decreases nuclear localization and transcriptional activity, and increases localization to the plasma membrane and interaction with E-cadherin CDH1. Post-translationally, deacetylated at Lys-49 by SIRT1. Phosphorylated at Thr-556 by herpes virus 1/HHV-1 leading to CTNNB1 inhibition. Expressed in several hair follicle cell types: basal and peripheral matrix cells, and cells of the outer and inner root sheaths. Expressed in colon. Present in cortical neurons (at protein level). Expressed in breast cancer tissues (at protein level).

It is found in the cytoplasm. The protein resides in the nucleus. It localises to the cytoskeleton. Its subcellular location is the cell junction. The protein localises to the adherens junction. It is found in the cell membrane. The protein resides in the microtubule organizing center. It localises to the centrosome. Its subcellular location is the spindle pole. The protein localises to the synapse. It is found in the cilium basal body. Functionally, key downstream component of the canonical Wnt signaling pathway. In the absence of Wnt, forms a complex with AXIN1, AXIN2, APC, CSNK1A1 and GSK3B that promotes phosphorylation on N-terminal Ser and Thr residues and ubiquitination of CTNNB1 via BTRC and its subsequent degradation by the proteasome. In the presence of Wnt ligand, CTNNB1 is not ubiquitinated and accumulates in the nucleus, where it acts as a coactivator for transcription factors of the TCF/LEF family, leading to activate Wnt responsive genes. Also acts as a coactivator for other transcription factors, such as NR5A2. Promotes epithelial to mesenchymal transition/mesenchymal to epithelial transition (EMT/MET) via driving transcription of CTNNB1/TCF-target genes. Involved in the regulation of cell adhesion, as component of an E-cadherin:catenin adhesion complex. Acts as a negative regulator of centrosome cohesion. Involved in the CDK2/PTPN6/CTNNB1/CEACAM1 pathway of insulin internalization. Blocks anoikis of malignant kidney and intestinal epithelial cells and promotes their anchorage-independent growth by down-regulating DAPK2. Disrupts PML function and PML-NB formation by inhibiting RANBP2-mediated sumoylation of PML. Promotes neurogenesis by maintaining sympathetic neuroblasts within the cell cycle. Involved in chondrocyte differentiation via interaction with SOX9: SOX9-binding competes with the binding sites of TCF/LEF within CTNNB1, thereby inhibiting the Wnt signaling. Acts as a positive regulator of odontoblast differentiation during mesenchymal tooth germ formation, via promoting the transcription of differentiation factors such as LEF1, BMP2 and BMP4. Activity is repressed in a MSX1-mediated manner at the bell stage of mesenchymal tooth germ formation which prevents premature differentiation of odontoblasts. This is Catenin beta-1 from Homo sapiens (Human).